The following is a 125-amino-acid chain: Ribonuclease P protein component (125 aa).

Belongs to the RnpA family. As to quaternary structure, consists of a catalytic RNA component (M1 or rnpB) and a protein subunit.

The enzyme catalyses Endonucleolytic cleavage of RNA, removing 5'-extranucleotides from tRNA precursor.. Its function is as follows. RNaseP catalyzes the removal of the 5'-leader sequence from pre-tRNA to produce the mature 5'-terminus. It can also cleave other RNA substrates such as 4.5S RNA. The protein component plays an auxiliary but essential role in vivo by binding to the 5'-leader sequence and broadening the substrate specificity of the ribozyme. This Clostridium beijerinckii (strain ATCC 51743 / NCIMB 8052) (Clostridium acetobutylicum) protein is Ribonuclease P protein component.